The chain runs to 115 residues: Ribonuclease P protein component (115 aa).

Belongs to the RnpA family. As to quaternary structure, consists of a catalytic RNA component (M1 or rnpB) and a protein subunit.

It catalyses the reaction Endonucleolytic cleavage of RNA, removing 5'-extranucleotides from tRNA precursor.. RNaseP catalyzes the removal of the 5'-leader sequence from pre-tRNA to produce the mature 5'-terminus. It can also cleave other RNA substrates such as 4.5S RNA. The protein component plays an auxiliary but essential role in vivo by binding to the 5'-leader sequence and broadening the substrate specificity of the ribozyme. This is Ribonuclease P protein component from Bacillus cereus (strain B4264).